The sequence spans 469 residues: uncharacterized protein (469 aa).

Residues 11–65 adopt a coiled-coil conformation; that stretch reads LFISVAFSQESVEDLKRLLEEYKKKIQEIERRLEELEKAKKEEEKKKEAVALKPT.

This is an uncharacterized protein from Aquifex aeolicus (strain VF5).